Reading from the N-terminus, the 820-residue chain is TORTIFOLIA1-like protein 2 (820 aa).

HEAT repeat units follow at residues Asp61–Gly98, Pro102–Cys139, Gly146–Glu183, Ala187–Ala224, and Ser228–Lys265. The segment covering Pro304–Ser321 has biased composition (low complexity). Disordered regions lie at residues Pro304–Ala325, Pro357–Asp377, and Gly584–Gly644. Residues Tyr367–Asp377 show a composition bias toward basic and acidic residues. A compositionally biased stretch (polar residues) spans Gly584–Lys613.

This is TORTIFOLIA1-like protein 2 from Arabidopsis thaliana (Mouse-ear cress).